The following is a 317-amino-acid chain: Adenine deaminase (317 aa).

Positions 14, 16, and 194 each coordinate Zn(2+). The active-site Proton donor is Glu-197. Asp-275 provides a ligand contact to Zn(2+). Position 276 (Asp-276) interacts with substrate.

The protein belongs to the metallo-dependent hydrolases superfamily. Adenosine and AMP deaminases family. Adenine deaminase type 2 subfamily. Zn(2+) is required as a cofactor.

The enzyme catalyses adenine + H2O + H(+) = hypoxanthine + NH4(+). Catalyzes the hydrolytic deamination of adenine to hypoxanthine. Plays an important role in the purine salvage pathway and in nitrogen catabolism. The sequence is that of Adenine deaminase from Bordetella bronchiseptica (strain ATCC BAA-588 / NCTC 13252 / RB50) (Alcaligenes bronchisepticus).